Reading from the N-terminus, the 170-residue chain is ATP synthase subunit b (170 aa).

A helical transmembrane segment spans residues 30–50 (FFFVLAIFLVVLGVIGTFVVP).

Belongs to the ATPase B chain family. As to quaternary structure, F-type ATPases have 2 components, F(1) - the catalytic core - and F(0) - the membrane proton channel. F(1) has five subunits: alpha(3), beta(3), gamma(1), delta(1), epsilon(1). F(0) has three main subunits: a(1), b(2) and c(10-14). The alpha and beta chains form an alternating ring which encloses part of the gamma chain. F(1) is attached to F(0) by a central stalk formed by the gamma and epsilon chains, while a peripheral stalk is formed by the delta and b chains.

It localises to the cell membrane. Its function is as follows. F(1)F(0) ATP synthase produces ATP from ADP in the presence of a proton or sodium gradient. F-type ATPases consist of two structural domains, F(1) containing the extramembraneous catalytic core and F(0) containing the membrane proton channel, linked together by a central stalk and a peripheral stalk. During catalysis, ATP synthesis in the catalytic domain of F(1) is coupled via a rotary mechanism of the central stalk subunits to proton translocation. Component of the F(0) channel, it forms part of the peripheral stalk, linking F(1) to F(0). The polypeptide is ATP synthase subunit b (Mycobacterium leprae (strain TN)).